Here is a 322-residue protein sequence, read N- to C-terminus: tRNA-dihydrouridine synthase B (322 aa).

Residues 16–18 (PMA) and Gln70 each bind FMN. The active-site Proton donor is Cys100. Residues Lys139, 200 to 202 (NGD), and 224 to 225 (GR) each bind FMN.

Belongs to the Dus family. DusB subfamily. FMN is required as a cofactor.

It carries out the reaction a 5,6-dihydrouridine in tRNA + NAD(+) = a uridine in tRNA + NADH + H(+). The enzyme catalyses a 5,6-dihydrouridine in tRNA + NADP(+) = a uridine in tRNA + NADPH + H(+). Functionally, catalyzes the synthesis of 5,6-dihydrouridine (D), a modified base found in the D-loop of most tRNAs, via the reduction of the C5-C6 double bond in target uridines. This chain is tRNA-dihydrouridine synthase B, found in Vibrio parahaemolyticus serotype O3:K6 (strain RIMD 2210633).